A 342-amino-acid chain; its full sequence is 4-hydroxy-2-oxovalerate aldolase (342 aa).

In terms of domain architecture, Pyruvate carboxyltransferase spans Ile5 to Gln257. Arg13–Asp14 is a binding site for substrate. Residue Asp14 participates in Mn(2+) binding. Residue His17 is the Proton acceptor of the active site. Substrate is bound by residues Ser167 and His196. Residues His196 and His198 each contribute to the Mn(2+) site. Residue Tyr287 coordinates substrate.

It belongs to the 4-hydroxy-2-oxovalerate aldolase family.

It carries out the reaction (S)-4-hydroxy-2-oxopentanoate = acetaldehyde + pyruvate. The polypeptide is 4-hydroxy-2-oxovalerate aldolase (Acidovorax sp. (strain JS42)).